A 158-amino-acid chain; its full sequence is uncharacterized protein (158 aa).

Over residues 1–18 the composition is skewed to polar residues; that stretch reads MDLASEITSATQTSSLCS. Disordered regions lie at residues 1 to 20, 66 to 94, and 111 to 158; these read MDLASEITSATQTSSLCSSG, LRDLSRRGSTSSSRSPSRPVSTSASKPCL, and GSSG…GEEF. A compositionally biased stretch (low complexity) spans 72–90; the sequence is RGSTSSSRSPSRPVSTSAS. 2 stretches are compositionally biased toward polar residues: residues 111–120 and 149–158; these read GSSGHLQSPG and LSHSAQGEEF.

This is an uncharacterized protein from Homo sapiens (Human).